Consider the following 108-residue polypeptide: MLTYLFCDPSISFVPIWVLVTITTGSPQANRRCCIMTPNISITLNTPHVTIERYSELTGLSIDTINDMLADGRIPRHRLRKDKKREKVMINLAALTVDALTDCNVVFN.

The protein is Protein ORFa in retron Ec67 of Escherichia coli.